A 293-amino-acid polypeptide reads, in one-letter code: Protease HtpX homolog (293 aa).

A run of 2 helical transmembrane segments spans residues 4–24 and 39–59; these read IFLF…VLSL and PMLL…SLLI. Residue histidine 144 participates in Zn(2+) binding. The active site involves glutamate 145. Residue histidine 148 coordinates Zn(2+). A run of 2 helical transmembrane segments spans residues 159-179 and 200-220; these read LVQG…GYFV and ITVL…VAWF. A Zn(2+)-binding site is contributed by glutamate 225.

It belongs to the peptidase M48B family. Requires Zn(2+) as cofactor.

The protein localises to the cell inner membrane. The chain is Protease HtpX homolog from Herminiimonas arsenicoxydans.